We begin with the raw amino-acid sequence, 147 residues long: uncharacterized protein (147 aa).

A disordered region spans residues 30–102 (GRCEQVALSS…TPPTRPESIF (73 aa)). Polar residues predominate over residues 62-71 (RPSTGETFVQ).

This is an uncharacterized protein from Homo sapiens (Human).